A 320-amino-acid polypeptide reads, in one-letter code: o-succinylbenzoate synthase (320 aa).

Catalysis depends on K133, which acts as the Proton donor. 3 residues coordinate Mg(2+): D161, E190, and D213. K235 (proton acceptor) is an active-site residue.

It belongs to the mandelate racemase/muconate lactonizing enzyme family. MenC type 1 subfamily. The cofactor is a divalent metal cation.

The catalysed reaction is (1R,6R)-6-hydroxy-2-succinyl-cyclohexa-2,4-diene-1-carboxylate = 2-succinylbenzoate + H2O. The protein operates within quinol/quinone metabolism; 1,4-dihydroxy-2-naphthoate biosynthesis; 1,4-dihydroxy-2-naphthoate from chorismate: step 4/7. It functions in the pathway quinol/quinone metabolism; menaquinone biosynthesis. Its function is as follows. Converts 2-succinyl-6-hydroxy-2,4-cyclohexadiene-1-carboxylate (SHCHC) to 2-succinylbenzoate (OSB). The chain is o-succinylbenzoate synthase from Escherichia coli O6:H1 (strain CFT073 / ATCC 700928 / UPEC).